A 236-amino-acid polypeptide reads, in one-letter code: Factor V activator RVV-V alpha (236 aa).

One can recognise a Peptidase S1 domain in the interval 1–227 (VVGGDECNIN…YNNWIQNIIA (227 aa)). Disulfide bonds link C7-C141, C28-C44, C76-C234, C120-C188, C152-C167, and C178-C203. Residues H43 and D88 each act as charge relay system in the active site. The Charge relay system role is filled by S182. N-linked (GlcNAc...) asparagine glycosylation occurs at N229.

Belongs to the peptidase S1 family. Snake venom subfamily. As to quaternary structure, monomer. In terms of tissue distribution, expressed by the venom gland.

Its subcellular location is the secreted. The enzyme catalyses Fully activates human clotting factor V by a single cleavage at the 1545-Trp-Tyr-Leu-Arg-|-Ser-Asn-Asn-Gly-1552 bond. Cattle, but not rabbit, factor V is cleaved, and no other proteins of the clotting system are attacked. Esterase activity is observed on Bz-Arg-OEt and Tos-Arg-OMe, and amidase activity on Phe-pipecolyl-Arg-NHPhNO2.. Its activity is regulated as follows. Inhibited by D-Phe-Pro-Arg-chloromethyl ketone (FPRCK) (97%), PMSF (76%), and benzamidine (50%). Is not inhibited by BPTI, antithrombin and EDTA. Functionally, venom serine protease that activates factor V (F5) in a calcium-independent manner. It cleaves the Arg(1545)-Ser(1546) linkage in the human factor V molecule. Induces the coagulation of mammalian plasma. The chain is Factor V activator RVV-V alpha from Daboia siamensis (Eastern Russel's viper).